Here is a 301-residue protein sequence, read N- to C-terminus: MFNVQFDIFNFSNNITFLTLLISLISYWLGLIFKKIKNVFYIGYGSTILACITITIILGTRWIESGYFPLSNLYESLMFLTWGLLFSAIYLEYKTNLYLIGAIVSPISLFIVSFSTLSLPQDMQKAAPLVPALKSNWLMMHVSVMMLSYSTLIIGSLLAILYLVLIKAQQKKHSLKDFAFANLEFTFPKSTNSTNFNLLETLDNLSYRTIGFGFPLLTIGIIAGAVWANEAWGTYWSWDPKETWALITWLVFAAYLHARITKSWTGERPAYLAALGFVVVWICYLGVNFLGKGLHSYGWLN.

A run of 8 helical transmembrane segments spans residues 13–33, 39–59, 73–93, 97–117, 146–166, 209–229, 236–256, and 270–290; these read NNITFLTLLISLISYWLGLIF, VFYIGYGSTILACITITIILG, LYESLMFLTWGLLFSAIYLEY, LYLIGAIVSPISLFIVSFSTL, MLSYSTLIIGSLLAILYLVLI, TIGFGFPLLTIGIIAGAVWAN, WSWDPKETWALITWLVFAAYL, and AYLAALGFVVVWICYLGVNFL.

This sequence belongs to the CcmF/CycK/Ccl1/NrfE/CcsA family. May interact with Ccs1.

The protein resides in the plastid. Its subcellular location is the chloroplast thylakoid membrane. Its function is as follows. Required during biogenesis of c-type cytochromes (cytochrome c6 and cytochrome f) at the step of heme attachment. The chain is Cytochrome c biogenesis protein CcsA from Guillardia theta (Cryptophyte).